Here is an 828-residue protein sequence, read N- to C-terminus: Protein kintoun (828 aa).

Disordered stretches follow at residues 1-31, 223-250, 383-424, 556-668, and 741-828; these read MSGS…DEPI, KNPT…EGEP, DSGV…PTSN, APVQ…HRGI, and KKNQ…EDLI. Residues 9 to 22 show a composition bias toward basic residues; it reads RNKHSKGNLKHNNN. The residue at position 384 (serine 384) is a Phosphoserine. Residues 395-414 are compositionally biased toward acidic residues; sequence PVEEEEDGEDEIEAEEEEEE. A compositionally biased stretch (basic and acidic residues) spans 556 to 573; that stretch reads APVQEDKPGDIQFKRNDQ. Positions 591–601 are enriched in acidic residues; the sequence is EREEGEIEEAE. Positions 606–620 are enriched in basic residues; it reads KKSASKKQRGKRNKK. Residues 625 to 641 are compositionally biased toward polar residues; sequence SESACVSLPTSVDSQPM. Over residues 741–755 the composition is skewed to basic residues; the sequence is KKNQKRRDCKLRAQQ. Serine 759 carries the phosphoserine modification. The span at 788–808 shows a compositional bias: basic and acidic residues; it reads DSGLDLTRHNKKRELAEEADN. The segment covering 815 to 828 has biased composition (acidic residues); it reads EMDDDDDDEDEDLI.

Belongs to the PIH1 family. Kintoun subfamily. Interacts with Pp1alpha-96A, Pp1-87B, Pp1-13C and flw.

Its subcellular location is the cytoplasm. Functionally, required for cytoplasmic pre-assembly of axonemal dyneins, thereby playing a central role in motility in cilia and flagella. Involved in pre-assembly of dynein arm complexes in the cytoplasm before intraflagellar transport loads them for the ciliary compartment. In Drosophila willistoni (Fruit fly), this protein is Protein kintoun.